A 115-amino-acid chain; its full sequence is NADH-ubiquinone oxidoreductase chain 3 (115 aa).

3 helical membrane passes run 3–23 (LMLT…IAFW), 55–75 (FFLV…LLPL), and 84–104 (LNTM…SLAY).

The protein belongs to the complex I subunit 3 family. As to quaternary structure, core subunit of respiratory chain NADH dehydrogenase (Complex I) which is composed of 45 different subunits. Interacts with TMEM186. Interacts with TMEM242.

The protein localises to the mitochondrion inner membrane. It catalyses the reaction a ubiquinone + NADH + 5 H(+)(in) = a ubiquinol + NAD(+) + 4 H(+)(out). Its function is as follows. Core subunit of the mitochondrial membrane respiratory chain NADH dehydrogenase (Complex I) which catalyzes electron transfer from NADH through the respiratory chain, using ubiquinone as an electron acceptor. Essential for the catalytic activity of complex I. In Equus asinus (Donkey), this protein is NADH-ubiquinone oxidoreductase chain 3.